The following is a 348-amino-acid chain: Dihydroorotase (348 aa).

2 residues coordinate Zn(2+): H13 and H15. Substrate-binding positions include 15–17 (HLR) and N41. Zn(2+) is bound by residues K99, H136, and H174. K99 bears the N6-carboxylysine mark. H136 contacts substrate. L219 contributes to the substrate binding site. Residue D247 coordinates Zn(2+). D247 is an active-site residue. H251 and A263 together coordinate substrate.

Belongs to the metallo-dependent hydrolases superfamily. DHOase family. Class II DHOase subfamily. In terms of assembly, homodimer. Requires Zn(2+) as cofactor.

The enzyme catalyses (S)-dihydroorotate + H2O = N-carbamoyl-L-aspartate + H(+). The protein operates within pyrimidine metabolism; UMP biosynthesis via de novo pathway; (S)-dihydroorotate from bicarbonate: step 3/3. In terms of biological role, catalyzes the reversible cyclization of carbamoyl aspartate to dihydroorotate. The polypeptide is Dihydroorotase (Coxiella burnetii (strain RSA 331 / Henzerling II)).